Reading from the N-terminus, the 343-residue chain is L-threonine 3-dehydrogenase (343 aa).

Residue cysteine 40 coordinates Zn(2+). Catalysis depends on charge relay system residues threonine 42 and histidine 45. Zn(2+) contacts are provided by histidine 65, glutamate 66, cysteine 95, cysteine 98, cysteine 101, and cysteine 109. Residues isoleucine 177, aspartate 197, arginine 202, 264–266 (LGI), and 288–289 (IY) contribute to the NAD(+) site.

It belongs to the zinc-containing alcohol dehydrogenase family. In terms of assembly, homotetramer. It depends on Zn(2+) as a cofactor.

It is found in the cytoplasm. The catalysed reaction is L-threonine + NAD(+) = (2S)-2-amino-3-oxobutanoate + NADH + H(+). It functions in the pathway amino-acid degradation; L-threonine degradation via oxydo-reductase pathway; glycine from L-threonine: step 1/2. Functionally, catalyzes the NAD(+)-dependent oxidation of L-threonine to 2-amino-3-ketobutyrate. The polypeptide is L-threonine 3-dehydrogenase (Aliivibrio salmonicida (strain LFI1238) (Vibrio salmonicida (strain LFI1238))).